A 388-amino-acid chain; its full sequence is GTPase Obg (388 aa).

The 159-residue stretch at 1 to 159 (MKFIDEASIR…RSLRLELLLL (159 aa)) folds into the Obg domain. The OBG-type G domain occupies 160–333 (ADVGLLGMPN…LSLKLLDYIA (174 aa)). Residues 166–173 (GMPNAGKS), 191–195 (FTTLV), 213–216 (DIPG), 283–286 (NKTD), and 314–316 (SAF) each bind GTP. 2 residues coordinate Mg(2+): S173 and T193.

The protein belongs to the TRAFAC class OBG-HflX-like GTPase superfamily. OBG GTPase family. In terms of assembly, monomer. Mg(2+) serves as cofactor.

The protein localises to the cytoplasm. An essential GTPase which binds GTP, GDP and possibly (p)ppGpp with moderate affinity, with high nucleotide exchange rates and a fairly low GTP hydrolysis rate. Plays a role in control of the cell cycle, stress response, ribosome biogenesis and in those bacteria that undergo differentiation, in morphogenesis control. The sequence is that of GTPase Obg from Shewanella denitrificans (strain OS217 / ATCC BAA-1090 / DSM 15013).